A 93-amino-acid chain; its full sequence is Small ribosomal subunit protein uS19 (93 aa).

It belongs to the universal ribosomal protein uS19 family.

Its function is as follows. Protein S19 forms a complex with S13 that binds strongly to the 16S ribosomal RNA. This is Small ribosomal subunit protein uS19 from Phytoplasma australiense.